Here is an 86-residue protein sequence, read N- to C-terminus: Large ribosomal subunit protein bL27 (86 aa).

Residues 1 to 26 (MASKKAGGSTKNGRDSQSKRLGVKRF) form a disordered region.

Belongs to the bacterial ribosomal protein bL27 family.

The chain is Large ribosomal subunit protein bL27 from Bdellovibrio bacteriovorus (strain ATCC 15356 / DSM 50701 / NCIMB 9529 / HD100).